We begin with the raw amino-acid sequence, 230 residues long: Uracil-DNA glycosylase (230 aa).

Aspartate 70 acts as the Proton acceptor in catalysis.

The protein belongs to the uracil-DNA glycosylase (UDG) superfamily. UNG family.

It is found in the cytoplasm. It catalyses the reaction Hydrolyzes single-stranded DNA or mismatched double-stranded DNA and polynucleotides, releasing free uracil.. Excises uracil residues from the DNA which can arise as a result of misincorporation of dUMP residues by DNA polymerase or due to deamination of cytosine. The polypeptide is Uracil-DNA glycosylase (Pseudomonas putida (strain W619)).